The chain runs to 153 residues: UPF0735 ACT domain-containing protein FN1487 (153 aa).

An ACT domain is found at 76-152 (SLHLSLKDRV…GIADIRITGS (77 aa)).

The protein belongs to the UPF0735 family.

The protein is UPF0735 ACT domain-containing protein FN1487 of Fusobacterium nucleatum subsp. nucleatum (strain ATCC 25586 / DSM 15643 / BCRC 10681 / CIP 101130 / JCM 8532 / KCTC 2640 / LMG 13131 / VPI 4355).